Reading from the N-terminus, the 406-residue chain is Lissencephaly-1 homolog (406 aa).

Positions 7 to 39 constitute a LisH domain; the sequence is QREELNKAIADYLRSNGYESALEAFQKEAEMPG. Residues 54 to 81 adopt a coiled-coil conformation; sequence TSVIRLQKKVMDLEAKLAEAEKEFQSGG. Residues 74 to 89 are compositionally biased toward basic and acidic residues; the sequence is EKEFQSGGPNKKERSP. The segment at 74 to 99 is disordered; it reads EKEFQSGGPNKKERSPSEWIPRPPAR. WD repeat units lie at residues 104 to 145, 146 to 185, 188 to 227, 230 to 269, 272 to 329, 332 to 371, and 374 to 406; these read GHRS…RTLK, GHTD…NIKT, GHDH…CVKT, GHRE…CKAE, EHEH…CIMT, GHDN…CQKT, and AHQH…WECR.

The protein belongs to the WD repeat LIS1/nudF family.

It is found in the cytoplasm. The protein localises to the cytoskeleton. It localises to the microtubule organizing center. Its subcellular location is the centrosome. Functionally, positively regulates the activity of the minus-end directed microtubule motor protein dynein. May enhance dynein-mediated microtubule sliding by targeting dynein to the microtubule plus end. Required for several dynein- and microtubule-dependent processes. This is Lissencephaly-1 homolog from Branchiostoma floridae (Florida lancelet).